We begin with the raw amino-acid sequence, 275 residues long: Large ribosomal subunit protein uL2 (275 aa).

Positions Ala223–Gly275 are disordered.

The protein belongs to the universal ribosomal protein uL2 family. In terms of assembly, part of the 50S ribosomal subunit. Forms a bridge to the 30S subunit in the 70S ribosome.

One of the primary rRNA binding proteins. Required for association of the 30S and 50S subunits to form the 70S ribosome, for tRNA binding and peptide bond formation. It has been suggested to have peptidyltransferase activity; this is somewhat controversial. Makes several contacts with the 16S rRNA in the 70S ribosome. This Xanthomonas campestris pv. campestris (strain 8004) protein is Large ribosomal subunit protein uL2.